Reading from the N-terminus, the 106-residue chain is SH3 domain-binding glutamic acid-rich-like protein 2-A (106 aa).

The short motif at 61–67 (QGNPLPP) is the SH3-binding element.

This sequence belongs to the SH3BGR family.

Its subcellular location is the nucleus. The polypeptide is SH3 domain-binding glutamic acid-rich-like protein 2-A (sh3bgrl2-a) (Xenopus laevis (African clawed frog)).